We begin with the raw amino-acid sequence, 536 residues long: Chromosomal replication initiator protein DnaA (536 aa).

The domain I, interacts with DnaA modulators stretch occupies residues 1–72 (MNDFWQHCSA…DLARDFWNAP (72 aa)). Positions 72–199 (PIEVQFVLDP…EAADSMYERS (128 aa)) are domain II. The interval 97–121 (RAPLPAANPAPVTAGPAPSGAADAN) is disordered. The segment covering 105–121 (PAPVTAGPAPSGAADAN) has biased composition (low complexity). Residues 200–416 (KLNPVLTFDN…GALRKILAYS (217 aa)) form a domain III, AAA+ region region. ATP is bound by residues Gly244, Gly246, Lys247, and Thr248. A domain IV, binds dsDNA region spans residues 417-536 (KFHGREITIE…LHVLEQTLKG (120 aa)).

Belongs to the DnaA family. In terms of assembly, oligomerizes as a right-handed, spiral filament on DNA at oriC.

The protein resides in the cytoplasm. Plays an essential role in the initiation and regulation of chromosomal replication. ATP-DnaA binds to the origin of replication (oriC) to initiate formation of the DNA replication initiation complex once per cell cycle. Binds the DnaA box (a 9 base pair repeat at the origin) and separates the double-stranded (ds)DNA. Forms a right-handed helical filament on oriC DNA; dsDNA binds to the exterior of the filament while single-stranded (ss)DNA is stabiized in the filament's interior. The ATP-DnaA-oriC complex binds and stabilizes one strand of the AT-rich DNA unwinding element (DUE), permitting loading of DNA polymerase. After initiation quickly degrades to an ADP-DnaA complex that is not apt for DNA replication. Binds acidic phospholipids. This chain is Chromosomal replication initiator protein DnaA, found in Burkholderia thailandensis (strain ATCC 700388 / DSM 13276 / CCUG 48851 / CIP 106301 / E264).